Consider the following 274-residue polypeptide: Large ribosomal subunit protein uL2 (274 aa).

The disordered stretch occupies residues V195–K274. Composition is skewed to basic residues over residues G209 to N220 and P244 to S264.

The protein belongs to the universal ribosomal protein uL2 family. Part of the 50S ribosomal subunit. Forms a bridge to the 30S subunit in the 70S ribosome.

Functionally, one of the primary rRNA binding proteins. Required for association of the 30S and 50S subunits to form the 70S ribosome, for tRNA binding and peptide bond formation. It has been suggested to have peptidyltransferase activity; this is somewhat controversial. Makes several contacts with the 16S rRNA in the 70S ribosome. The protein is Large ribosomal subunit protein uL2 of Bacteroides fragilis (strain ATCC 25285 / DSM 2151 / CCUG 4856 / JCM 11019 / LMG 10263 / NCTC 9343 / Onslow / VPI 2553 / EN-2).